The following is a 431-amino-acid chain: Adenylosuccinate synthetase (431 aa).

Residues 12 to 18 and 40 to 42 contribute to the GTP site; these read GDEGKGK and GHT. Aspartate 13 (proton acceptor) is an active-site residue. Residues aspartate 13 and glycine 40 each contribute to the Mg(2+) site. Residues 13–16, 38–41, threonine 131, arginine 145, glutamine 225, threonine 240, and arginine 304 contribute to the IMP site; these read DEGK and NAGH. Histidine 41 functions as the Proton donor in the catalytic mechanism. 300 to 306 serves as a coordination point for substrate; that stretch reads VNTGRRR. GTP-binding positions include arginine 306, 332 to 334, and 414 to 416; these read KLD and STS.

Belongs to the adenylosuccinate synthetase family. Homodimer. Mg(2+) is required as a cofactor.

It is found in the cytoplasm. The enzyme catalyses IMP + L-aspartate + GTP = N(6)-(1,2-dicarboxyethyl)-AMP + GDP + phosphate + 2 H(+). Its pathway is purine metabolism; AMP biosynthesis via de novo pathway; AMP from IMP: step 1/2. Functionally, plays an important role in the de novo pathway of purine nucleotide biosynthesis. Catalyzes the first committed step in the biosynthesis of AMP from IMP. This chain is Adenylosuccinate synthetase, found in Beijerinckia indica subsp. indica (strain ATCC 9039 / DSM 1715 / NCIMB 8712).